The chain runs to 300 residues: Cation-efflux pump FieF (300 aa).

4 helical membrane passes run alanine 12–tryptophan 32, isoleucine 39–valine 59, alanine 82–isoleucine 102, and proline 114–phenylalanine 134. Residues aspartate 45 and aspartate 49 each contribute to the Zn(2+) site. Histidine 153 and aspartate 157 together coordinate Zn(2+). 2 consecutive transmembrane segments (helical) span residues serine 156–histidine 176 and alanine 178–glycine 198.

The protein belongs to the cation diffusion facilitator (CDF) transporter (TC 2.A.4) family. FieF subfamily. As to quaternary structure, homodimer.

It localises to the cell inner membrane. The enzyme catalyses Zn(2+)(in) + H(+)(out) = Zn(2+)(out) + H(+)(in). It catalyses the reaction Cd(2+)(in) + H(+)(out) = Cd(2+)(out) + H(+)(in). The catalysed reaction is Fe(2+)(in) + H(+)(out) = Fe(2+)(out) + H(+)(in). In terms of biological role, divalent metal cation transporter which exports Zn(2+), Cd(2+) and possibly Fe(2+). May be involved in zinc and iron detoxification by efflux. In Salmonella arizonae (strain ATCC BAA-731 / CDC346-86 / RSK2980), this protein is Cation-efflux pump FieF.